Consider the following 116-residue polypeptide: Calcium-regulated OB-fold protein CarO (116 aa).

The first 21 residues, 1–21, serve as a signal peptide directing secretion; the sequence is MKLRHLPLIAAIGLFSTVTLA.

It localises to the periplasm. In terms of biological role, plays a role in intracellular Ca(2+) homeostasis. Involved in cell protection against oxidative stress in strain 25W. The protein is Calcium-regulated OB-fold protein CarO of Pseudomonas aeruginosa (strain ATCC 15692 / DSM 22644 / CIP 104116 / JCM 14847 / LMG 12228 / 1C / PRS 101 / PAO1).